Here is a 165-residue protein sequence, read N- to C-terminus: 3-hydroxyacyl-[acyl-carrier-protein] dehydratase FERN, mitochondrial (165 aa).

The transit peptide at 1 to 35 directs the protein to the mitochondrion; it reads MLMKRLFSSSHVFSSSSASSNLLKIGSVLKQARTF. In terms of domain architecture, MaoC-like spans 36–124; that stretch reads ADDDVLGYSK…AVSIRQIKNK (89 aa).

As to quaternary structure, homodimer.

It localises to the mitochondrion. It catalyses the reaction a (3R)-hydroxyacyl-[ACP] = a (2E)-enoyl-[ACP] + H2O. It functions in the pathway lipid metabolism; fatty acid biosynthesis. Functionally, 3-hydroxyl-[acyl-carrier-protein] (3-hydroxyl-ACP) dehydratase required for mitochondrial fatty acid synthesis (mtFAS). Essential for photorespiration, tomato morphogenesis and plant development, probably by influencing mitochondrial membrane lipid composition and other lipid metabolic pathways, and by contributing to energy supply and reactive oxygen species (ROS) homeostasis. The sequence is that of 3-hydroxyacyl-[acyl-carrier-protein] dehydratase FERN, mitochondrial from Solanum lycopersicum (Tomato).